Here is a 258-residue protein sequence, read N- to C-terminus: Snake venom serine protease 3 (258 aa).

The first 18 residues, 1–18 (MVLIRVLANLLILQLSYA), serve as a signal peptide directing secretion. Positions 19 to 24 (QKSSEL) are excised as a propeptide. Residues 25-249 (VIGGDECNIN…YTDWIQSIIA (225 aa)) enclose the Peptidase S1 domain. 6 disulfides stabilise this stretch: cysteine 31–cysteine 163, cysteine 50–cysteine 66, cysteine 98–cysteine 256, cysteine 142–cysteine 210, cysteine 174–cysteine 189, and cysteine 200–cysteine 225. Asparagine 44 carries N-linked (GlcNAc...) asparagine glycosylation. The Charge relay system role is filled by histidine 65. N-linked (GlcNAc...) asparagine glycosylation is present at asparagine 103. Aspartate 110 functions as the Charge relay system in the catalytic mechanism. Residues asparagine 117, asparagine 121, and asparagine 154 are each glycosylated (N-linked (GlcNAc...) asparagine). Residue serine 204 is the Charge relay system of the active site. Asparagine 251 is a glycosylation site (N-linked (GlcNAc...) asparagine).

Belongs to the peptidase S1 family. Snake venom subfamily. As to quaternary structure, monomer. Expressed by the venom gland.

The protein resides in the secreted. Functionally, snake venom serine protease that may act in the hemostasis system of the prey. In Craspedocephalus gramineus (Bamboo pit viper), this protein is Snake venom serine protease 3 (TLG3).